We begin with the raw amino-acid sequence, 275 residues long: Hydroxyethylthiazole kinase (275 aa).

Met-50 serves as a coordination point for substrate. The ATP site is built by Arg-126 and Ser-171. A substrate-binding site is contributed by Ala-200.

It belongs to the Thz kinase family. Requires Mg(2+) as cofactor.

It carries out the reaction 5-(2-hydroxyethyl)-4-methylthiazole + ATP = 4-methyl-5-(2-phosphooxyethyl)-thiazole + ADP + H(+). Its pathway is cofactor biosynthesis; thiamine diphosphate biosynthesis; 4-methyl-5-(2-phosphoethyl)-thiazole from 5-(2-hydroxyethyl)-4-methylthiazole: step 1/1. Functionally, catalyzes the phosphorylation of the hydroxyl group of 4-methyl-5-beta-hydroxyethylthiazole (THZ). This Acinetobacter baumannii (strain ACICU) protein is Hydroxyethylthiazole kinase.